Reading from the N-terminus, the 401-residue chain is Argininosuccinate synthase (401 aa).

ATP contacts are provided by residues 11–19 (AYSGGLDTS) and Ala38. L-citrulline is bound by residues Tyr89 and Ser94. Gly119 contributes to the ATP binding site. Residues Thr121, Asn125, and Asp126 each contribute to the L-aspartate site. Residue Asn125 coordinates L-citrulline. Positions 129, 180, 189, 265, and 277 each coordinate L-citrulline.

Belongs to the argininosuccinate synthase family. Type 1 subfamily. Homotetramer.

Its subcellular location is the cytoplasm. The enzyme catalyses L-citrulline + L-aspartate + ATP = 2-(N(omega)-L-arginino)succinate + AMP + diphosphate + H(+). It functions in the pathway amino-acid biosynthesis; L-arginine biosynthesis; L-arginine from L-ornithine and carbamoyl phosphate: step 2/3. The protein is Argininosuccinate synthase of Syntrophus aciditrophicus (strain SB).